The primary structure comprises 473 residues: H(+)/Cl(-) exchange transporter ClcA (473 aa).

Topologically, residues 1 to 32 (MKTDTSTFLAQQIVRLRRRDQIRRLMQRDKTP) are cytoplasmic. Residues 33–69 (LAILFMAAVVGTLTGLVGVAFEKAVSWVQNMRIGALV) traverse the membrane as a helical segment. Over 70–76 (QVADHAF) the chain is Periplasmic. A helical transmembrane segment spans residues 77 to 100 (LLWPLAFILSALLAMVGYFLVRKF). Residues 106–110 (GSGIP) carry the Selectivity filter part_1 motif. Residue Ser107 participates in chloride binding. The segment at residues 109 to 116 (IPEIEGAL) is an intramembrane region (helical). Residues 117–123 (EELRPVR) lie on the Cytoplasmic side of the membrane. The next 2 helical transmembrane spans lie at 124-141 (WWRV…TLGA) and 148-166 (EGPT…LDVF). Positions 146–150 (GREGP) match the Selectivity filter part_2 motif. The Cytoplasmic portion of the chain corresponds to 167 to 176 (RMRSAEARHT). 2 consecutive intramembrane regions (helical) follow at residues 177–189 (LLAT…LSAA) and 193–201 (PLAGILFII). Topologically, residues 202-214 (EEMRPQFRYNLIS) are cytoplasmic. A helical transmembrane segment spans residues 215–232 (IKAVFTGVIMSSIVFRIF). Residues 233-252 (NGEAPIIEVGKLSDAPVNTL) lie on the Periplasmic side of the membrane. Residues 253–281 (WLYLILGIIFGCVGPVFNSLVLRTQDMFQ) traverse the membrane as a helical segment. The Cytoplasmic segment spans residues 282-287 (RFHGGE). The helical transmembrane segment at 288–309 (IKKWVLMGGAIGGLCGILGLIE) threads the bilayer. At 310-329 (PEAAGGGFNLIPIAAAGNFS) the chain is on the periplasmic side. The next 2 helical transmembrane spans lie at 330–349 (VGLL…LCFS) and 355–376 (GIFA…MAAA). The Selectivity filter part_3 signature appears at 355–359 (GIFAP). Residues Ile356 and Phe357 each contribute to the chloride site. The Periplasmic segment spans residues 377 to 386 (VLFPQYHLEA). Positions 387 to 401 (GTFAIAGMGALMAAS) form an intramembrane region, helical. An intramembrane region (note=Loop between two helices) is located at residues 402 to 404 (VRA). The helical intramembrane region spans 405 to 416 (PLTGIVLVLEMT). The segment at residues 417–421 (DNYQL) is an intramembrane region (note=Loop between two helices). The chain crosses the membrane as a helical span at residues 422–438 (ILPMIITCLGATLLAQF). Residues 439–473 (LGGKPLYSTILARTLAKQDAEQAAKNQNAPAGENT) are Cytoplasmic-facing. Tyr445 is a binding site for chloride.

It belongs to the chloride channel (TC 2.A.49) family. ClcA subfamily. As to quaternary structure, homodimer.

The protein localises to the cell inner membrane. The catalysed reaction is 2 chloride(in) + H(+)(out) = 2 chloride(out) + H(+)(in). Functionally, proton-coupled chloride transporter. Functions as antiport system and exchanges two chloride ions for 1 proton. Probably acts as an electrical shunt for an outwardly-directed proton pump that is linked to amino acid decarboxylation, as part of the extreme acid resistance (XAR) response. This chain is H(+)/Cl(-) exchange transporter ClcA, found in Salmonella agona (strain SL483).